A 215-amino-acid chain; its full sequence is MLEDEKITDAQSGEADPAITPSSVASASAKKHKKKKKKKAGEGKDDQQRETKTTEGETAKQETSELTPDEQLSRELDWCIEQLELGLRTQKTSSKQREEASRALKTLRSSKAPLVKKRQVMRAISGDYRKKIEEEKNRQFKLIQSAMTSARVTTVSECKPVFHRRAERNTQPKNKTDGSQETQSSQETNEHTKTEDTKPFVFTKTHDEFCFDFDL.

Disordered regions lie at residues 1-72, 87-111, and 158-199; these read MLED…DEQL, LRTQKTSSKQREEASRALKTLRSSK, and CKPV…DTKP. The segment covering 29 to 39 has biased composition (basic residues); the sequence is AKKHKKKKKKK. Positions 40–63 are enriched in basic and acidic residues; that stretch reads AGEGKDDQQRETKTTEGETAKQET. 2 stretches are compositionally biased toward basic and acidic residues: residues 167–178 and 188–199; these read ERNTQPKNKTDG and TNEHTKTEDTKP.

The protein belongs to the UPF0488 family.

The protein is UPF0488 protein C8orf33 homolog of Danio rerio (Zebrafish).